The primary structure comprises 241 residues: DNA repair protein RecO (241 aa).

Belongs to the RecO family.

Functionally, involved in DNA repair and RecF pathway recombination. The protein is DNA repair protein RecO of Orientia tsutsugamushi (strain Boryong) (Rickettsia tsutsugamushi).